Reading from the N-terminus, the 312-residue chain is Pantothenate kinase (312 aa).

Residue 97 to 104 participates in ATP binding; sequence GSVAVGKS.

It belongs to the prokaryotic pantothenate kinase family.

The protein localises to the cytoplasm. It carries out the reaction (R)-pantothenate + ATP = (R)-4'-phosphopantothenate + ADP + H(+). It participates in cofactor biosynthesis; coenzyme A biosynthesis; CoA from (R)-pantothenate: step 1/5. The polypeptide is Pantothenate kinase (Mycobacterium marinum (strain ATCC BAA-535 / M)).